An 891-amino-acid chain; its full sequence is Protein translocase subunit SecA (891 aa).

Residues Q83, 101–105, and D489 contribute to the ATP site; that span reads GEGKT.

Belongs to the SecA family.

The protein localises to the plastid. The protein resides in the chloroplast stroma. It localises to the chloroplast thylakoid membrane. It catalyses the reaction ATP + H2O + cellular proteinSide 1 = ADP + phosphate + cellular proteinSide 2.. Functionally, has a central role in coupling the hydrolysis of ATP to the transfer of proteins across the thylakoid membrane. The chain is Protein translocase subunit SecA from Diacronema lutheri (Unicellular marine alga).